Reading from the N-terminus, the 196-residue chain is MAGEGKPLPIEFYQRPSVELAPLLLGCLLVKETDEGTASGFIVETEAYMGAEDRAAHSFGNRRTKRTEIMFHEAGRIYTYVMHTHTLMNVVAADIGIPQAVLIRAAEPHEGQFLMESRRPGRHPREWTNGPGKLTKAMGISMNDYGGMITEPPLYITEGFTPEHISTGPRIGIDNSGEARDYPWRYWVTGNRYVSR.

This sequence belongs to the DNA glycosylase MPG family.

The sequence is that of Putative 3-methyladenine DNA glycosylase from Bacillus velezensis (strain DSM 23117 / BGSC 10A6 / LMG 26770 / FZB42) (Bacillus amyloliquefaciens subsp. plantarum).